The sequence spans 241 residues: Endothelial protein C receptor (241 aa).

The N-terminal stretch at 1-17 is a signal peptide; that stretch reads MLTTLLPLLPLLLPGWA. The Extracellular segment spans residues 18-212; the sequence is LCSQEASDGP…GSQTGRSYTS (195 aa). N-linked (GlcNAc...) asparagine glycans are attached at residues N49, N66, N138, and N174. 2 cysteine pairs are disulfide-bonded: C120–C188 and C221–C234. The helical transmembrane segment at 213 to 233 threads the bilayer; that stretch reads LVLGVLVGCFIVTGVAVGIFL. The Cytoplasmic segment spans residues 234–241; sequence CTGGRRRC.

In terms of tissue distribution, expressed in endothelial cells.

It is found in the membrane. In terms of biological role, binds activated protein C. Enhances protein C activation by the thrombin-thrombomodulin complex; plays a role in the protein C pathway controlling blood coagulation. This Bos taurus (Bovine) protein is Endothelial protein C receptor (PROCR).